Reading from the N-terminus, the 311-residue chain is Serine/threonine-protein phosphatase PP1-1 (311 aa).

Mn(2+)-binding residues include D53, H55, D82, and N114. H115 acts as the Proton donor in catalysis. Mn(2+)-binding residues include H164 and H238.

This sequence belongs to the PPP phosphatase family. PP-6 (PP-V) subfamily. Inactivated in a complex with phosphatase methylesterase PPE1 (PP2Ai). Interacts with phosphatase 2A activator RRD1, which can reactivate PP2Ai by dissociating the catalytic subunit from the complex. Forms a ternary complex with RRD1-TAP42. Requires Mn(2+) as cofactor.

The protein localises to the cytoplasm. The enzyme catalyses O-phospho-L-seryl-[protein] + H2O = L-seryl-[protein] + phosphate. The catalysed reaction is O-phospho-L-threonyl-[protein] + H2O = L-threonyl-[protein] + phosphate. Functionally, involved in the dephosphorylation of the large subunit of RNA polymerase II. Is required in late G1 for normal G1 cyclin expression, bud initiation and expression of certain genes that are periodically expressed during late G1. Associates with the SAP proteins in a cell cycle-dependent manner. The protein is Serine/threonine-protein phosphatase PP1-1 (SIT4) of Saccharomyces cerevisiae (strain ATCC 204508 / S288c) (Baker's yeast).